The chain runs to 107 residues: Iron-binding protein IscA (107 aa).

The Fe cation site is built by C35, C99, and C101.

The protein belongs to the HesB/IscA family. Homodimer; may form tetramers and higher multimers. Requires Fe cation as cofactor.

In terms of biological role, is able to transfer iron-sulfur clusters to apo-ferredoxin. Multiple cycles of [2Fe2S] cluster formation and transfer are observed, suggesting that IscA acts catalytically. Recruits intracellular free iron so as to provide iron for the assembly of transient iron-sulfur cluster in IscU in the presence of IscS, L-cysteine and the thioredoxin reductase system TrxA/TrxB. The sequence is that of Iron-binding protein IscA from Salmonella newport (strain SL254).